Reading from the N-terminus, the 395-residue chain is S-adenosylmethionine synthase (395 aa).

Residue histidine 16 coordinates ATP. Residue aspartate 18 coordinates Mg(2+). Residue glutamate 44 participates in K(+) binding. L-methionine contacts are provided by glutamate 57 and glutamine 100. The flexible loop stretch occupies residues 100-110 (QSPDIAQGVDD). Residues 174–176 (DAK), 241–242 (RF), aspartate 250, 256–257 (RK), alanine 273, and lysine 277 each bind ATP. L-methionine is bound at residue aspartate 250. L-methionine is bound at residue lysine 281.

Belongs to the AdoMet synthase family. As to quaternary structure, homotetramer; dimer of dimers. Requires Mg(2+) as cofactor. The cofactor is K(+).

It localises to the cytoplasm. It catalyses the reaction L-methionine + ATP + H2O = S-adenosyl-L-methionine + phosphate + diphosphate. The protein operates within amino-acid biosynthesis; S-adenosyl-L-methionine biosynthesis; S-adenosyl-L-methionine from L-methionine: step 1/1. Functionally, catalyzes the formation of S-adenosylmethionine (AdoMet) from methionine and ATP. The overall synthetic reaction is composed of two sequential steps, AdoMet formation and the subsequent tripolyphosphate hydrolysis which occurs prior to release of AdoMet from the enzyme. The protein is S-adenosylmethionine synthase of Lactiplantibacillus plantarum (strain ATCC BAA-793 / NCIMB 8826 / WCFS1) (Lactobacillus plantarum).